The sequence spans 491 residues: Cytochrome P450 2F3 (491 aa).

Cys-436 lines the heme pocket.

Belongs to the cytochrome P450 family. Requires heme as cofactor. Lung specific.

Its subcellular location is the endoplasmic reticulum membrane. It is found in the microsome membrane. It catalyses the reaction an organic molecule + reduced [NADPH--hemoprotein reductase] + O2 = an alcohol + oxidized [NADPH--hemoprotein reductase] + H2O + H(+). Functionally, bioactivates 3-methylindole (3MI) by dehydrogenation to the putative electrophile 3-methylene-indolenine. Stereoselectively catalyzes the formation of the 1R,2S-oxide from naphthalene. Lack activity with other common P450 substrates including 7-ethoxycoumarin. The chain is Cytochrome P450 2F3 (CYP2F3) from Capra hircus (Goat).